Consider the following 294-residue polypeptide: MADKLIKATAKDGQVRIIGAITTELVNKGIEVHKCSPTGAAALGRMLTAGSLMGSMLKSEKDTITIKIDGGGEAKGVLVTAYPEGKVKGYIGNPLVHLPLNQNGKLDVGGAIGKNGNITVIKDLGLKDPYIGQVPIYSGEIGDDLAYYFTVSEQTPSAVGLGVLVDKDLSIKASGGFIIQMMPGADELLADFITYRLEEIPSITELISKGMSIEEILEFIFEGMDLKILEGIVPEYTCDCSREKIDRALISIGYKDLKEIYDEGKTEELVCQFCNEKYFYDHEKIGELLRIMNN.

Intrachain disulfides connect Cys238/Cys240 and Cys271/Cys274.

Belongs to the HSP33 family. In terms of processing, under oxidizing conditions two disulfide bonds are formed involving the reactive cysteines. Under reducing conditions zinc is bound to the reactive cysteines and the protein is inactive.

The protein localises to the cytoplasm. Its function is as follows. Redox regulated molecular chaperone. Protects both thermally unfolding and oxidatively damaged proteins from irreversible aggregation. Plays an important role in the bacterial defense system toward oxidative stress. The protein is 33 kDa chaperonin of Clostridium tetani (strain Massachusetts / E88).